Consider the following 682-residue polypeptide: Heat shock 70 kDa protein 9, mitochondrial (682 aa).

The N-terminal 46 residues, 1 to 46, are a transit peptide targeting the mitochondrion; that stretch reads MASVALLRSFRRREVQMASVSAFKSVSANGKNSMFGKLGYLARPFC. The segment at 640 to 682 is disordered; sequence SKIGEHMSKGSGSSGSDGSSGEGTSGTEQTPEAEFEEASGSRK. Residues 651–663 show a composition bias toward gly residues; that stretch reads GSSGSDGSSGEGT.

It belongs to the heat shock protein 70 (TC 1.A.33) family. DnaK subfamily. In terms of assembly, interacts with HSCB.

The protein resides in the mitochondrion. It is found in the cytoplasm. Its subcellular location is the cytosol. Functionally, chaperone involved in the maturation of iron-sulfur [Fe-S] cluster-containing proteins. Has a low intrinsic ATPase activity which is markedly stimulated by HSCB and ISU1. In cooperation with other chaperones, Hsp70s are key components that facilitate folding of de novo synthesized proteins, assist translocation of precursor proteins into organelles, and are responsible for degradation of damaged protein under stress conditions. The chain is Heat shock 70 kDa protein 9, mitochondrial from Arabidopsis thaliana (Mouse-ear cress).